The following is a 457-amino-acid chain: Multidrug resistance protein MdtK (457 aa).

12 helical membrane-spanning segments follow: residues 11-31 (LLAL…MGFV), 53-73 (IWLP…PVIA), 93-113 (WLAG…GYII), 127-147 (AVGY…FQVA), 160-180 (GMVM…IFIY), 188-208 (LGGI…FIAM), 243-263 (LPIA…ALLV), 276-296 (IALN…AAVT), 314-334 (AART…IFTV), 350-370 (VVAL…SDSI), 387-407 (IFFI…YILA), and 418-438 (PAGF…LMML).

The protein belongs to the multi antimicrobial extrusion (MATE) (TC 2.A.66.1) family. MdtK subfamily.

Its subcellular location is the cell inner membrane. Its function is as follows. Multidrug efflux pump that functions probably as a Na(+)/drug antiporter. This is Multidrug resistance protein MdtK from Salmonella agona (strain SL483).